The primary structure comprises 286 residues: Urease accessory protein UreD 2 (286 aa).

Belongs to the UreD family. UreD, UreF and UreG form a complex that acts as a GTP-hydrolysis-dependent molecular chaperone, activating the urease apoprotein by helping to assemble the nickel containing metallocenter of UreC. The UreE protein probably delivers the nickel.

The protein localises to the cytoplasm. Its function is as follows. Required for maturation of urease via the functional incorporation of the urease nickel metallocenter. In Bradyrhizobium sp. (strain ORS 278), this protein is Urease accessory protein UreD 2.